Reading from the N-terminus, the 388-residue chain is 2-Hydroxyacid oxidase (388 aa).

The tract at residues 1 to 21 (MENQFKNNNNSSSIETSNQFS) is disordered. The FMN hydroxy acid dehydrogenase domain occupies 26-384 (NRLDSFVSVS…NNSIIWDQNK (359 aa)). Y52 serves as a coordination point for glyoxylate. FMN contacts are provided by residues 105–107 (PWA), S134, 156–158 (QLY), and T184. Y158 lines the glyoxylate pocket. R193 serves as a coordination point for glyoxylate. FMN-binding residues include K255 and S277. The glyoxylate site is built by H279 and R282. H279 (proton acceptor) is an active-site residue. Residues 310–314 (DGGIR) and 333–334 (GR) each bind FMN.

The protein belongs to the FMN-dependent alpha-hydroxy acid dehydrogenase family. In terms of assembly, homotetramer. Requires FMN as cofactor.

The enzyme catalyses glycolate + O2 = glyoxylate + H2O2. The catalysed reaction is a (2S)-2-hydroxycarboxylate + O2 = a 2-oxocarboxylate + H2O2. Its function is as follows. Catalyzes the oxidation of glycolate to glyoxylate, with a reduction of O2 to H2O2. May use other 2-hydroxyacids as substrates. The sequence is that of 2-Hydroxyacid oxidase (haox) from Dictyostelium discoideum (Social amoeba).